The following is a 327-amino-acid chain: MTKRIAITPGEPASIGPDLVIKLAQQAWPVELVVCADPNLLMTRAKMLGLPLQLRPYQPSQPPKPQTAGTLTIAPFTLAEEVECGVLNEANSAYVVETLRYAGEKNMSNEFDAVVTGPVHKGIINQAGIPFSGHTEFFALQANCADVVMMLAAPGLQVALMTTHIPLAYVAKAITRDRLHHIITILHRELVSKFGLGSPKIYVCGLNPHAGEDGHLGREEIDTIIPALNELREQGMDIVGPLPADTLFQPKYLEQADVVLAMYHDQGLPVLKSLGFGKSVNITLGLPYIRTSVDHGTALELAGSGKADCGSFTCALNKAIELASKSK.

Positions 134 and 135 each coordinate substrate. Positions 164, 209, and 264 each coordinate a divalent metal cation. 3 residues coordinate substrate: Lys272, Asn281, and Arg290.

This sequence belongs to the PdxA family. In terms of assembly, homodimer. Requires Zn(2+) as cofactor. It depends on Mg(2+) as a cofactor. Co(2+) is required as a cofactor.

It localises to the cytoplasm. The enzyme catalyses 4-(phosphooxy)-L-threonine + NAD(+) = 3-amino-2-oxopropyl phosphate + CO2 + NADH. It participates in cofactor biosynthesis; pyridoxine 5'-phosphate biosynthesis; pyridoxine 5'-phosphate from D-erythrose 4-phosphate: step 4/5. Its function is as follows. Catalyzes the NAD(P)-dependent oxidation of 4-(phosphooxy)-L-threonine (HTP) into 2-amino-3-oxo-4-(phosphooxy)butyric acid which spontaneously decarboxylates to form 3-amino-2-oxopropyl phosphate (AHAP). This is 4-hydroxythreonine-4-phosphate dehydrogenase from Shewanella frigidimarina (strain NCIMB 400).